Reading from the N-terminus, the 341-residue chain is Lipoyl synthase (341 aa).

Residues Cys-85, Cys-90, Cys-96, Cys-111, Cys-115, Cys-118, and Ser-325 each contribute to the [4Fe-4S] cluster site. A Radical SAM core domain is found at 97–314 (FSGGTATFMI…AEEGYKMGFK (218 aa)).

Belongs to the radical SAM superfamily. Lipoyl synthase family. The cofactor is [4Fe-4S] cluster.

The protein resides in the cytoplasm. It catalyses the reaction [[Fe-S] cluster scaffold protein carrying a second [4Fe-4S](2+) cluster] + N(6)-octanoyl-L-lysyl-[protein] + 2 oxidized [2Fe-2S]-[ferredoxin] + 2 S-adenosyl-L-methionine + 4 H(+) = [[Fe-S] cluster scaffold protein] + N(6)-[(R)-dihydrolipoyl]-L-lysyl-[protein] + 4 Fe(3+) + 2 hydrogen sulfide + 2 5'-deoxyadenosine + 2 L-methionine + 2 reduced [2Fe-2S]-[ferredoxin]. It participates in protein modification; protein lipoylation via endogenous pathway; protein N(6)-(lipoyl)lysine from octanoyl-[acyl-carrier-protein]: step 2/2. Functionally, catalyzes the radical-mediated insertion of two sulfur atoms into the C-6 and C-8 positions of the octanoyl moiety bound to the lipoyl domains of lipoate-dependent enzymes, thereby converting the octanoylated domains into lipoylated derivatives. The polypeptide is Lipoyl synthase (Pseudomonas fluorescens (strain SBW25)).